A 501-amino-acid chain; its full sequence is Aspartyl/glutamyl-tRNA(Asn/Gln) amidotransferase subunit B (501 aa).

Positions 276-299 (HYQEADGSTSKGRPKETAEDYRYF) are disordered. Positions 288-299 (RPKETAEDYRYF) are enriched in basic and acidic residues.

Belongs to the GatB/GatE family. GatB subfamily. Heterotrimer of A, B and C subunits.

The enzyme catalyses L-glutamyl-tRNA(Gln) + L-glutamine + ATP + H2O = L-glutaminyl-tRNA(Gln) + L-glutamate + ADP + phosphate + H(+). It carries out the reaction L-aspartyl-tRNA(Asn) + L-glutamine + ATP + H2O = L-asparaginyl-tRNA(Asn) + L-glutamate + ADP + phosphate + 2 H(+). Allows the formation of correctly charged Asn-tRNA(Asn) or Gln-tRNA(Gln) through the transamidation of misacylated Asp-tRNA(Asn) or Glu-tRNA(Gln) in organisms which lack either or both of asparaginyl-tRNA or glutaminyl-tRNA synthetases. The reaction takes place in the presence of glutamine and ATP through an activated phospho-Asp-tRNA(Asn) or phospho-Glu-tRNA(Gln). The chain is Aspartyl/glutamyl-tRNA(Asn/Gln) amidotransferase subunit B from Corynebacterium glutamicum (strain R).